The chain runs to 139 residues: MKNARLFLIAIGVFYIINLIGTLPFSTLGLFGRMYPGVELHVGAPIFTLLQDAWAVVGLQLGAIGAVALWGARDPGRYRAVIPVVIATEVVDGLWDFYSIVWSHEALWFGLVTLVIHVLWIGWGLHAWRALASKSLRTL.

This is an uncharacterized protein from Burkholderia cepacia (Pseudomonas cepacia).